Consider the following 576-residue polypeptide: Eukaryotic translation initiation factor 3 subunit L (576 aa).

The 207-residue stretch at 330 to 536 folds into the PCI domain; the sequence is DAIRVFANIL…IHIADTKVAR (207 aa).

The protein belongs to the eIF-3 subunit L family. Component of the eukaryotic translation initiation factor 3 (eIF-3) complex, which is composed of 13 subunits: eif3a, eif3b, eif3c, eif3d, eif3e, eif3f, eif3g, eif3h, eif3i, eif3j, eif3k, eif3l and eif3m.

It localises to the cytoplasm. Component of the eukaryotic translation initiation factor 3 (eIF-3) complex, which is involved in protein synthesis of a specialized repertoire of mRNAs and, together with other initiation factors, stimulates binding of mRNA and methionyl-tRNAi to the 40S ribosome. The eIF-3 complex specifically targets and initiates translation of a subset of mRNAs involved in cell proliferation. In Danio rerio (Zebrafish), this protein is Eukaryotic translation initiation factor 3 subunit L (eif3l).